Here is a 347-residue protein sequence, read N- to C-terminus: Quinolinate synthase (347 aa).

Positions 47 and 68 each coordinate iminosuccinate. Cys-113 contacts [4Fe-4S] cluster. Iminosuccinate contacts are provided by residues 139–141 (YAN) and Ser-156. Residue Cys-200 coordinates [4Fe-4S] cluster. Residues 226 to 228 (HPE) and Thr-243 each bind iminosuccinate. Cys-297 serves as a coordination point for [4Fe-4S] cluster.

This sequence belongs to the quinolinate synthase family. Type 1 subfamily. Requires [4Fe-4S] cluster as cofactor.

The protein resides in the cytoplasm. The catalysed reaction is iminosuccinate + dihydroxyacetone phosphate = quinolinate + phosphate + 2 H2O + H(+). It participates in cofactor biosynthesis; NAD(+) biosynthesis; quinolinate from iminoaspartate: step 1/1. Catalyzes the condensation of iminoaspartate with dihydroxyacetone phosphate to form quinolinate. The polypeptide is Quinolinate synthase (Salmonella heidelberg (strain SL476)).